A 325-amino-acid chain; its full sequence is Protein SAR DEFICIENT 4 (325 aa).

The transit peptide at 1–42 directs the protein to the chloroplast; the sequence is MAALPVFIPAESFPSILSHETLINHFRTNLPKHSSTITSPVR.

This sequence belongs to the ornithine cyclodeaminase/mu-crystallin family.

It localises to the plastid. It is found in the chloroplast. Its function is as follows. Involved in the biosynthesis of pipecolate (Pip), a metabolite that orchestrates defense amplification, positive regulation of salicylic acid (SA) biosynthesis, and priming to guarantee effective local resistance induction and the establishment of systemic acquired resistance (SAR). Converts delta-(1)-piperideine-2-carboxylate (P2C) to Pip. Mediates reduction of P2C and biosynthesis of Pip in systemic tissue and contributes to SAR establishment. Does not possess ornithine cyclodeaminase activity in vitro. The sequence is that of Protein SAR DEFICIENT 4 from Arabidopsis thaliana (Mouse-ear cress).